We begin with the raw amino-acid sequence, 289 residues long: 4-hydroxy-3-methylbut-2-enyl diphosphate reductase (289 aa).

Cys-13 contributes to the [4Fe-4S] cluster binding site. (2E)-4-hydroxy-3-methylbut-2-enyl diphosphate-binding residues include His-41 and His-75. 2 residues coordinate dimethylallyl diphosphate: His-41 and His-75. Residues His-41 and His-75 each contribute to the isopentenyl diphosphate site. Cys-97 serves as a coordination point for [4Fe-4S] cluster. His-129 is a (2E)-4-hydroxy-3-methylbut-2-enyl diphosphate binding site. Residue His-129 coordinates dimethylallyl diphosphate. His-129 is an isopentenyl diphosphate binding site. The active-site Proton donor is the Glu-131. Thr-167 serves as a coordination point for (2E)-4-hydroxy-3-methylbut-2-enyl diphosphate. Residue Cys-198 coordinates [4Fe-4S] cluster. (2E)-4-hydroxy-3-methylbut-2-enyl diphosphate contacts are provided by Ser-226, Ser-227, Asn-228, and Ser-270. The dimethylallyl diphosphate site is built by Ser-226, Ser-227, Asn-228, and Ser-270. Residues Ser-226, Ser-227, Asn-228, and Ser-270 each contribute to the isopentenyl diphosphate site.

It belongs to the IspH family. The cofactor is [4Fe-4S] cluster.

The catalysed reaction is isopentenyl diphosphate + 2 oxidized [2Fe-2S]-[ferredoxin] + H2O = (2E)-4-hydroxy-3-methylbut-2-enyl diphosphate + 2 reduced [2Fe-2S]-[ferredoxin] + 2 H(+). The enzyme catalyses dimethylallyl diphosphate + 2 oxidized [2Fe-2S]-[ferredoxin] + H2O = (2E)-4-hydroxy-3-methylbut-2-enyl diphosphate + 2 reduced [2Fe-2S]-[ferredoxin] + 2 H(+). It functions in the pathway isoprenoid biosynthesis; dimethylallyl diphosphate biosynthesis; dimethylallyl diphosphate from (2E)-4-hydroxy-3-methylbutenyl diphosphate: step 1/1. The protein operates within isoprenoid biosynthesis; isopentenyl diphosphate biosynthesis via DXP pathway; isopentenyl diphosphate from 1-deoxy-D-xylulose 5-phosphate: step 6/6. Catalyzes the conversion of 1-hydroxy-2-methyl-2-(E)-butenyl 4-diphosphate (HMBPP) into a mixture of isopentenyl diphosphate (IPP) and dimethylallyl diphosphate (DMAPP). Acts in the terminal step of the DOXP/MEP pathway for isoprenoid precursor biosynthesis. In Bacteroides thetaiotaomicron (strain ATCC 29148 / DSM 2079 / JCM 5827 / CCUG 10774 / NCTC 10582 / VPI-5482 / E50), this protein is 4-hydroxy-3-methylbut-2-enyl diphosphate reductase.